The following is a 637-amino-acid chain: Extracellular metalloproteinase 10 (637 aa).

The signal sequence occupies residues Met-1–Ala-19. Residues His-20–His-245 constitute a propeptide that is removed on maturation. The N-linked (GlcNAc...) asparagine glycan is linked to Asn-282. His-429 provides a ligand contact to Zn(2+). Glu-430 is a catalytic residue. Zn(2+) is bound at residue His-433. An N-linked (GlcNAc...) asparagine glycan is attached at Asn-502.

Belongs to the peptidase M36 family. Zn(2+) serves as cofactor.

It localises to the secreted. Its function is as follows. Secreted metalloproteinase that allows assimilation of proteinaceous substrates. The protein is Extracellular metalloproteinase 10 (MEP10) of Uncinocarpus reesii (strain UAMH 1704).